Consider the following 695-residue polypeptide: MNHDPAETRDTAAAPLADTESPSPVSPELTPHPAPAAQDIDTATAELTVDEDDEARLPEIEDDSAEVADGPLAVGRAAIEQAVRLAPTSPGVYRMLNAAHDVLYVGKAKNVKKRLSSYARPTGHVMRIARMIAATVTVEIISTSTETEALLLEANLIKQLRPRFNVLLRDDKSFPYILITGDHWAPQILKHRGAQSRPGRYFGPFASVGAVNRTITALQRAFLVRSCTDSFFESRTRPCLLYQIRRCSGPCTGEVDFPGYTELVREAKDFLSGRSRAVKQELAVEMEKASNELEFETAALYRDRLAALSAIQSQQGINPRTVEEADVFAIYQEGGYSCVEVFFFRTGQNWGNRAYFPRAEKSFTPEEVLASFLAQFYDDKPPPKLILLSHDIEDCALLADALCIKADRKVEISTPKRGEKKELVAHALTNAREALGRKLADTATQTRLLQGLATTLGLPKPPQRIEVYDNSHIQGTNAVGAMIVAGPDGFIKNQYRKFNIRSEGLTPGDDYAMMREVLERRFKRLAAAKAEGEAAKPNDDETPQWPDLVIIDGGRGQLNAARGVLTELGLDAEVTLLGVAKGPDRDAGRETLFMPEREAIKLEPRDPVLYFIQRLRDEAHRFVIGSHRKLRKKDIREAGLQEIPGIGPSRKRALLHHFGTLKEIERASLGDLGKVPGISAESARRIFDFFHPGPG.

Basic and acidic residues predominate over residues 1-10 (MNHDPAETRD). Residues 1-44 (MNHDPAETRDTAAAPLADTESPSPVSPELTPHPAPAAQDIDTAT) are disordered. The 79-residue stretch at 88-166 (TSPGVYRMLN…IKQLRPRFNV (79 aa)) folds into the GIY-YIG domain. Positions 276–311 (RAVKQELAVEMEKASNELEFETAALYRDRLAALSAI) constitute a UVR domain.

Belongs to the UvrC family. Interacts with UvrB in an incision complex.

The protein localises to the cytoplasm. Its function is as follows. The UvrABC repair system catalyzes the recognition and processing of DNA lesions. UvrC both incises the 5' and 3' sides of the lesion. The N-terminal half is responsible for the 3' incision and the C-terminal half is responsible for the 5' incision. This chain is UvrABC system protein C, found in Rhodopseudomonas palustris (strain HaA2).